Consider the following 215-residue polypeptide: Cytochrome b6 (215 aa).

A helical membrane pass occupies residues 32-52 (IFYCLGGITLTCFLVQVATGF). C35 provides a ligand contact to heme c. Heme b contacts are provided by H86 and H100. Transmembrane regions (helical) follow at residues 90 to 110 (ASMM…TGGF), 116 to 136 (LTWV…VTGY), and 186 to 206 (LHTF…FPMI). Heme b-binding residues include H187 and H202.

The protein belongs to the cytochrome b family. PetB subfamily. The 4 large subunits of the cytochrome b6-f complex are cytochrome b6, subunit IV (17 kDa polypeptide, PetD), cytochrome f and the Rieske protein, while the 4 small subunits are PetG, PetL, PetM and PetN. The complex functions as a dimer. Heme b serves as cofactor. Requires heme c as cofactor.

Its subcellular location is the plastid. The protein resides in the chloroplast thylakoid membrane. Its function is as follows. Component of the cytochrome b6-f complex, which mediates electron transfer between photosystem II (PSII) and photosystem I (PSI), cyclic electron flow around PSI, and state transitions. The protein is Cytochrome b6 of Phalaenopsis aphrodite subsp. formosana (Moth orchid).